The following is a 450-amino-acid chain: MEEPQKNDLSMREQEEEHPVRSSGPQISVSEFSCHCCYDTLVNPTTLNCGHSFCRHCLALWWMSSKKTECPECREKWEGFPKVNILLRDAIEKLFPDAIRMRVEDIQQNNDVVQSLAAFQKYGNDQNPLAPSTGRVNPQRGGGFFSGVLTALTGVAVILLVYHWRSRESEHGLLVHKAVDKWTMEEVVLWLEQLGPWASLYRDRFLSERVNGRLLLTLTEEEFSRAPYTIENSSHRRVILTELERVRALGVKPPQNLWEYKAVNPGRSLFLLYALKSSPRLGLLYLYLFDYTDCFLPFIHTICPLQENSSGEDIFTKLLDLREPTWKQWREFLVKYSFLPYQLIAEFAWDWLEVHYWTSRFLIVNAVLLSVLELFSFWRIWSRSELKTVPQRMWSHFWKVSTQGLFMAMFWPLIPQFVCNCLFYWALYFNPIINIDLVVKEVRRLETQVL.

Over residues 1 to 20 (MEEPQKNDLSMREQEEEHPV) the composition is skewed to basic and acidic residues. Residues 1-25 (MEEPQKNDLSMREQEEEHPVRSSGP) form a disordered region. Over 1 to 140 (MEEPQKNDLS…PSTGRVNPQR (140 aa)) the chain is Cytoplasmic. The segment at 34 to 74 (CHCCYDTLVNPTTLNCGHSFCRHCLALWWMSSKKTECPECR) adopts an RING-type zinc-finger fold. The helical transmembrane segment at 141–161 (GGGFFSGVLTALTGVAVILLV) threads the bilayer. The Extracellular portion of the chain corresponds to 162-331 (YHWRSRESEH…REPTWKQWRE (170 aa)). The 68-residue stretch at 182 to 249 (WTMEEVVLWL…LTELERVRAL (68 aa)) folds into the SAM domain. N-linked (GlcNAc...) asparagine glycosylation is found at Asn232 and Asn308. The helical transmembrane segment at 332–352 (FLVKYSFLPYQLIAEFAWDWL) threads the bilayer. Topologically, residues 353-360 (EVHYWTSR) are cytoplasmic. The chain crosses the membrane as a helical span at residues 361 to 381 (FLIVNAVLLSVLELFSFWRIW). At 382-404 (SRSELKTVPQRMWSHFWKVSTQG) the chain is on the extracellular side. A helical membrane pass occupies residues 405-425 (LFMAMFWPLIPQFVCNCLFYW). The Cytoplasmic segment spans residues 426–450 (ALYFNPIINIDLVVKEVRRLETQVL).

In terms of assembly, interacts with CASP8, BCL2 and BCL2L1 through SAM domain and also with HIP1, IFT57, ESRRBL1 and BCAP31. Interacts with NGFR; this interaction inhibits NF-kappa-B and JNK-related signaling pathways. Post-translationally, mediates RING-dependent self-ubiquitination leading to proteasomal degradation.

Its subcellular location is the endoplasmic reticulum membrane. It carries out the reaction S-ubiquitinyl-[E2 ubiquitin-conjugating enzyme]-L-cysteine + [acceptor protein]-L-lysine = [E2 ubiquitin-conjugating enzyme]-L-cysteine + N(6)-ubiquitinyl-[acceptor protein]-L-lysine.. In terms of biological role, membrane-bound E3 ubiquitin ligase that plays a role in several processes including apoptosis regulation or reticulum endoplasmic stress. Has anti-apoptotic activity, both for apoptosis triggered via death-receptors and via mitochondrial factors. Contributes to the dynamic control of IRE1/ERN1 signaling during ER stress by inducing BAX inhibitor 1/TMBIM6 proteasomal degradation. Promotes the activation of TGF-beta signaling by mediating the 'Lys-63'-linked ubiquitination of TGFBR1 which is critical to activate the pathway. Together with NGFR, negatively regulates NF-kappa-B and JNK-related signaling pathways. Promotes the proteasome-mediated degradation of PNPLA3, a protein involveld in lipid metabolism. In Mus musculus (Mouse), this protein is Bifunctional apoptosis regulator (Bfar).